A 100-amino-acid polypeptide reads, in one-letter code: MHLSPQEKDKLLIVTAALLAERRLNRGLKLNHPEAVAWLSFLVLEGARDGKSVAELMQEGTTWLRQDQVMEGVPELVHEVQMEAVFPDGTKLVTLHDPIR.

This sequence belongs to the urease gamma subunit family. Heterotrimer of UreA (gamma), UreB (beta) and UreC (alpha) subunits. Three heterotrimers associate to form the active enzyme.

It is found in the cytoplasm. It catalyses the reaction urea + 2 H2O + H(+) = hydrogencarbonate + 2 NH4(+). The protein operates within nitrogen metabolism; urea degradation; CO(2) and NH(3) from urea (urease route): step 1/1. The chain is Urease subunit gamma from Synechococcus sp. (strain CC9605).